The primary structure comprises 581 residues: Spastin (581 aa).

Over residues 1-12 the composition is skewed to basic residues; sequence MSSPAGRRKKKG. Positions 1–39 are disordered; sequence MSSPAGRRKKKGSGGASPAPARPPPPAAVPAPAAGPAPA. Residues 1–48 are required for nuclear localization; the sequence is MSSPAGRRKKKGSGGASPAPARPPPPAAVPAPAAGPAPAPGSPHKRNL. Over 1 to 54 the chain is Cytoplasmic; that stretch reads MSSPAGRRKKKGSGGASPAPARPPPPAAVPAPAAGPAPAPGSPHKRNLYYFSYP. Positions 1–78 are required for interaction with ATL1; sequence MSSPAGRRKK…LGLLFVWLCQ (78 aa). Positions 1-191 are required for midbody localization; sequence MSSPAGRRKK…LVMAKDRLQL (191 aa). Residues 1–265 form a required for interaction with RTN1 region; it reads MSSPAGRRKK…GTSKPNRTNK (265 aa). The short motif at 4–11 is the Nuclear localization signal element; the sequence is PAGRRKKK. Positions 20–39 are enriched in pro residues; it reads PARPPPPAAVPAPAAGPAPA. Residues 48-85 are required for interaction with SSNA1 and microtubules; sequence LYYFSYPLVVGFALLRLLACHLGLLFVWLCQRFSRALM. Residues 55–75 constitute an intramembrane region (helical); it reads LVVGFALLRLLACHLGLLFVW. The short motif at 57–65 is the Nuclear export signal element; sequence VGFALLRLL. At 76-581 the chain is on the cytoplasmic side; that stretch reads LCQRFSRALM…WNKDFGDTTV (506 aa). Positions 90–111 are disordered; sequence SSGTAPAPASPSTPAPGPGGEA. Pro residues predominate over residues 97–106; the sequence is PASPSTPAPG. The region spanning 118–192 is the MIT domain; it reads HKQAFEYISI…VMAKDRLQLL (75 aa). Residues 193 to 581 are sufficient for microtubule severing; sequence ESGAVPKKKD…WNKDFGDTTV (389 aa). The tract at residues 195-277 is disordered; the sequence is GAVPKKKDPL…TPTTAVRKKK (83 aa). Positions 206-225 are enriched in polar residues; the sequence is HASNSLPRSKTVMKSGSTGL. Phosphoserine occurs at positions 210 and 233. The tract at residues 235–293 is required for interaction with microtubules and microtubule severing; that stretch reads SGLSMVSGARPGSGPAATTHKGTSKPNRTNKPSTPTTAVRKKKDLKNFRNVDSNLANLI. Residues 254 to 271 show a composition bias toward polar residues; it reads HKGTSKPNRTNKPSTPTT. Thr271 is modified (phosphothreonine). The Nuclear localization signal motif lies at 274 to 277; it reads RKKK. 347–354 serves as a coordination point for ATP; sequence GPPGNGKT. Phosphoserine is present on Ser562.

Belongs to the AAA ATPase family. Spastin subfamily. As to quaternary structure, homohexamer. Mostly monomeric, but assembles into hexameric structure for short periods of time. Oligomerization seems to be a prerequisite for catalytic activity. Binding to ATP in a cleft between two adjacent subunits stabilizes the homohexameric form. Binds to microtubules at least in part via the alpha-tubulin and beta-tubulin tails. The hexamer adopts a ring conformation through which microtubules pass prior to being severed. Does not interact strongly with tubulin heterodimers. Interacts (via MIT domain) with CHMP1B; the interaction is direct. Interacts with SSNA1. Interacts with ATL1. Interacts with RTN1. Interacts with ZFYVE27. Interacts with REEP1. Interacts (via MIT domain) with IST1.

The protein resides in the membrane. Its subcellular location is the endoplasmic reticulum. It localises to the midbody. The protein localises to the cytoplasm. It is found in the cytoskeleton. The protein resides in the microtubule organizing center. Its subcellular location is the centrosome. It localises to the perinuclear region. The protein localises to the nucleus. It is found in the spindle. The protein resides in the cell projection. Its subcellular location is the axon. The catalysed reaction is n ATP + n H2O + a microtubule = n ADP + n phosphate + (n+1) alpha/beta tubulin heterodimers.. With respect to regulation, allosteric enzyme with a cooperative mechanism; at least two neighbor subunits influence each other strongly in spastin hexamers. Microtubule binding promotes cooperative interactions among spastin subunits. Its function is as follows. ATP-dependent microtubule severing protein that specifically recognizes and cuts microtubules that are polyglutamylated. Preferentially recognizes and acts on microtubules decorated with short polyglutamate tails: severing activity increases as the number of glutamates per tubulin rises from one to eight, but decreases beyond this glutamylation threshold. Severing activity is not dependent on tubulin acetylation or detyrosination. Microtubule severing promotes reorganization of cellular microtubule arrays and the release of microtubules from the centrosome following nucleation. It is critical for the biogenesis and maintenance of complex microtubule arrays in axons, spindles and cilia. SPAST is involved in abscission step of cytokinesis and nuclear envelope reassembly during anaphase in cooperation with the ESCRT-III complex. Recruited at the midbody, probably by IST1, and participates in membrane fission during abscission together with the ESCRT-III complex. Recruited to the nuclear membrane by IST1 and mediates microtubule severing, promoting nuclear envelope sealing and mitotic spindle disassembly during late anaphase. Required for membrane traffic from the endoplasmic reticulum (ER) to the Golgi and endosome recycling. Recruited by IST1 to endosomes and regulates early endosomal tubulation and recycling by mediating microtubule severing. Probably plays a role in axon growth and the formation of axonal branches. The chain is Spastin from Rattus norvegicus (Rat).